A 147-amino-acid chain; its full sequence is D-aminoacyl-tRNA deacylase (147 aa).

The short motif at G137 to P138 is the Gly-cisPro motif, important for rejection of L-amino acids element.

It belongs to the DTD family. In terms of assembly, homodimer.

It is found in the cytoplasm. It catalyses the reaction glycyl-tRNA(Ala) + H2O = tRNA(Ala) + glycine + H(+). The enzyme catalyses a D-aminoacyl-tRNA + H2O = a tRNA + a D-alpha-amino acid + H(+). Its function is as follows. An aminoacyl-tRNA editing enzyme that deacylates mischarged D-aminoacyl-tRNAs. Also deacylates mischarged glycyl-tRNA(Ala), protecting cells against glycine mischarging by AlaRS. Acts via tRNA-based rather than protein-based catalysis; rejects L-amino acids rather than detecting D-amino acids in the active site. By recycling D-aminoacyl-tRNA to D-amino acids and free tRNA molecules, this enzyme counteracts the toxicity associated with the formation of D-aminoacyl-tRNA entities in vivo and helps enforce protein L-homochirality. This chain is D-aminoacyl-tRNA deacylase, found in Bacillus licheniformis (strain ATCC 14580 / DSM 13 / JCM 2505 / CCUG 7422 / NBRC 12200 / NCIMB 9375 / NCTC 10341 / NRRL NRS-1264 / Gibson 46).